The chain runs to 490 residues: Probable cytosol aminopeptidase (490 aa).

Mn(2+) contacts are provided by Lys-258 and Asp-263. Lys-270 is an active-site residue. 3 residues coordinate Mn(2+): Asp-282, Asp-341, and Glu-343. The active site involves Arg-345.

The protein belongs to the peptidase M17 family. It depends on Mn(2+) as a cofactor.

Its subcellular location is the cytoplasm. The enzyme catalyses Release of an N-terminal amino acid, Xaa-|-Yaa-, in which Xaa is preferably Leu, but may be other amino acids including Pro although not Arg or Lys, and Yaa may be Pro. Amino acid amides and methyl esters are also readily hydrolyzed, but rates on arylamides are exceedingly low.. It catalyses the reaction Release of an N-terminal amino acid, preferentially leucine, but not glutamic or aspartic acids.. Functionally, presumably involved in the processing and regular turnover of intracellular proteins. Catalyzes the removal of unsubstituted N-terminal amino acids from various peptides. This chain is Probable cytosol aminopeptidase, found in Microcystis aeruginosa (strain NIES-843 / IAM M-2473).